The primary structure comprises 829 residues: Periplasmic nitrate reductase (829 aa).

The tat-type signal signal peptide spans 1 to 31 (MKLSRRDFMKANAVAAAAAAAGLTIPTVARA). In terms of domain architecture, 4Fe-4S Mo/W bis-MGD-type spans 40–96 (ITWDKAPCRFCGTGCGVLVGTQNGRIVASQGDPDAPVNRGLNCIKGYFLPKIMYGKD). The [4Fe-4S] cluster site is built by Cys-47, Cys-50, Cys-54, and Cys-82. Residues Lys-84, Gln-151, Asn-176, Cys-180, 213–220 (WGSNMAEM), 263–265 (QSD), Met-373, Gln-377, Asn-483, 509–510 (SD), Lys-532, Asp-559, and 719–728 (TGRVLEHWHT) each bind Mo-bis(molybdopterin guanine dinucleotide). Position 795 (Phe-795) interacts with substrate. Residues Asn-803 and Lys-820 each contribute to the Mo-bis(molybdopterin guanine dinucleotide) site.

The protein belongs to the prokaryotic molybdopterin-containing oxidoreductase family. NasA/NapA/NarB subfamily. As to quaternary structure, component of the periplasmic nitrate reductase NapAB complex composed of NapA and NapB. [4Fe-4S] cluster serves as cofactor. The cofactor is Mo-bis(molybdopterin guanine dinucleotide). In terms of processing, predicted to be exported by the Tat system. The position of the signal peptide cleavage has not been experimentally proven.

The protein localises to the periplasm. It carries out the reaction 2 Fe(II)-[cytochrome] + nitrate + 2 H(+) = 2 Fe(III)-[cytochrome] + nitrite + H2O. In terms of biological role, catalytic subunit of the periplasmic nitrate reductase complex NapAB. Receives electrons from NapB and catalyzes the reduction of nitrate to nitrite. This Edwardsiella ictaluri (strain 93-146) protein is Periplasmic nitrate reductase.